A 509-amino-acid polypeptide reads, in one-letter code: MDIRAAEISAILKEQIKNFGKEAEVSEVGQVLSVGDGIARVYGLDNVQAGEMVEFPGGIRGMALNLESDNVGVVIFGADRDIKEGDVVKRTGAIVDVPVGPELLGRVVDALGNPIDGKGPIKAKERRRVDVKAPGIIPRKSVHEPMSTGLKAIDALIPVGRGQRELVIGDRQTGKTAIILDTFLNQKPIHDNGPDKDKLYCVYVAVGQKRSTVAQFVKVLEERGALEYSIVVAATASDPAPMQYLAPFAGCAMGEYFRDNGQHALIGYDDLSKQAVAYRQMSLLLRRPPGREAYPGDVFYLHSRLLERAAKLNDENGAGSLTALPVIETQGNDVSAFIPTNVISITDGQIFLETNLFYQGIRPAVNVGLSVSRVGSSAQIKAMKQVAGSIKGELAQHREMAAFAQFGSDLDAATQRLLNRGARLTELLKQPQFSPLKTEEQVAVIYAGVNGYLDKLAVNQVGKFEEGLLASLRTEHKDVLEGIRNEKALTDDLKAKLKAAIDAFAKSFA.

Position 169–176 (169–176 (GDRQTGKT)) interacts with ATP.

It belongs to the ATPase alpha/beta chains family. In terms of assembly, F-type ATPases have 2 components, CF(1) - the catalytic core - and CF(0) - the membrane proton channel. CF(1) has five subunits: alpha(3), beta(3), gamma(1), delta(1), epsilon(1). CF(0) has three main subunits: a(1), b(2) and c(9-12). The alpha and beta chains form an alternating ring which encloses part of the gamma chain. CF(1) is attached to CF(0) by a central stalk formed by the gamma and epsilon chains, while a peripheral stalk is formed by the delta and b chains.

The protein resides in the cell inner membrane. It catalyses the reaction ATP + H2O + 4 H(+)(in) = ADP + phosphate + 5 H(+)(out). Functionally, produces ATP from ADP in the presence of a proton gradient across the membrane. The alpha chain is a regulatory subunit. The protein is ATP synthase subunit alpha of Brucella suis biovar 1 (strain 1330).